The primary structure comprises 594 residues: (E)-beta-ocimene synthase TPS6FN (594 aa).

Residues Arg303, Asp340, Asp344, Arg489, and Asn492 each coordinate (2E)-geranyl diphosphate. The Mg(2+) site is built by Asp340 and Asp344. Positions 340–344 (DDIYD) match the DDXXD motif motif. 3 residues coordinate Mg(2+): Asn492, Thr496, and Glu500.

The protein belongs to the terpene synthase family. Tpsb subfamily. It depends on Mg(2+) as a cofactor. Requires Mn(2+) as cofactor. Expressed in glandular trichomes two to four weeks after flowering onset.

It carries out the reaction (2E)-geranyl diphosphate = (E)-beta-ocimene + diphosphate. It catalyses the reaction (2E)-geranyl diphosphate = (Z)-beta-ocimene + diphosphate. Its pathway is secondary metabolite biosynthesis; terpenoid biosynthesis. Involved in monoterpene (C10) olefins biosynthesis, constituants of cannabinoids and terpenoids-rich resins. Catalyzes mainly the conversion of (2E)-geranyl diphosphate to (E)-beta-ocimene, and also produces minor products such as (Z)-beta-ocimene. The sequence is that of (E)-beta-ocimene synthase TPS6FN from Cannabis sativa (Hemp).